The sequence spans 114 residues: Chaperone protein YscY (114 aa).

As to quaternary structure, binds to YscX.

It is found in the cytoplasm. Its function is as follows. Required for Yop secretion. Functions probably as a chaperone which stabilizes YscX within the cell, before its secretion. In Yersinia enterocolitica serotype O:8 / biotype 1B (strain NCTC 13174 / 8081), this protein is Chaperone protein YscY (yscY).